Reading from the N-terminus, the 712-residue chain is Ribosomal RNA large subunit methyltransferase K/L (712 aa).

The THUMP domain occupies 46–157 (GAYQALLHSR…RENMVVSLDL (112 aa)).

The protein belongs to the methyltransferase superfamily. RlmKL family.

It is found in the cytoplasm. It carries out the reaction guanosine(2445) in 23S rRNA + S-adenosyl-L-methionine = N(2)-methylguanosine(2445) in 23S rRNA + S-adenosyl-L-homocysteine + H(+). The catalysed reaction is guanosine(2069) in 23S rRNA + S-adenosyl-L-methionine = N(2)-methylguanosine(2069) in 23S rRNA + S-adenosyl-L-homocysteine + H(+). In terms of biological role, specifically methylates the guanine in position 2445 (m2G2445) and the guanine in position 2069 (m7G2069) of 23S rRNA. This Actinobacillus pleuropneumoniae serotype 3 (strain JL03) protein is Ribosomal RNA large subunit methyltransferase K/L.